The following is a 470-amino-acid chain: Tigger transposable element-derived protein 3 (470 aa).

The HTH psq-type domain occupies 3–55; the sequence is LNTKKKLHALSLAEKIQVLELLDESKMSQSEVARRFQVSQPQISRICKNKEKL. DNA-binding regions (H-T-H motif) lie at residues 31 to 51 and 100 to 130; these read QSEV…ICKN and PMLL…WKRR. One can recognise an HTH CENPB-type domain in the interval 67–137; the sequence is ERKRKRESKY…KRRNNVGFGT (71 aa). Positions 167-360 constitute a DDE-1 domain; it reads FSPEDVFGCA…VPRQLILSSF (194 aa). A compositionally biased stretch (basic and acidic residues) spans 402–421; the sequence is DPGPRVCKEETGTEDSGREE. A disordered region spans residues 402-426; it reads DPGPRVCKEETGTEDSGREEDGFEP.

It belongs to the tigger transposable element derived protein family.

It localises to the nucleus. The chain is Tigger transposable element-derived protein 3 (Tigd3) from Mus musculus (Mouse).